Consider the following 210-residue polypeptide: Proteasome subunit beta (210 aa).

Residues Met1–Gly7 constitute a propeptide, removed in mature form; by autocatalysis. The active-site Nucleophile is the Thr8.

It belongs to the peptidase T1B family. The 20S proteasome core is composed of 14 alpha and 14 beta subunits that assemble into four stacked heptameric rings, resulting in a barrel-shaped structure. The two inner rings, each composed of seven catalytic beta subunits, are sandwiched by two outer rings, each composed of seven alpha subunits. The catalytic chamber with the active sites is on the inside of the barrel. Has a gated structure, the ends of the cylinder being occluded by the N-termini of the alpha-subunits. Is capped at one or both ends by the proteasome regulatory ATPase, PAN.

It localises to the cytoplasm. It catalyses the reaction Cleavage of peptide bonds with very broad specificity.. The formation of the proteasomal ATPase PAN-20S proteasome complex, via the docking of the C-termini of PAN into the intersubunit pockets in the alpha-rings, triggers opening of the gate for substrate entry. Interconversion between the open-gate and close-gate conformations leads to a dynamic regulation of the 20S proteasome proteolysis activity. Component of the proteasome core, a large protease complex with broad specificity involved in protein degradation. The protein is Proteasome subunit beta of Picrophilus torridus (strain ATCC 700027 / DSM 9790 / JCM 10055 / NBRC 100828 / KAW 2/3).